Consider the following 235-residue polypeptide: H2HPP isomerase (235 aa).

Cupin type-2 domains are found at residues 41–106 (VPPH…AIDI) and 151–216 (KIPG…KSIN). Histidine 50, histidine 52, glutamine 56, histidine 91, histidine 162, histidine 164, glutamine 168, and histidine 202 together coordinate a divalent metal cation. Substrate is bound at residue tyrosine 223.

In terms of assembly, monomer. The cofactor is Fe(2+). Co(2+) is required as a cofactor.

The protein resides in the cytoplasm. It carries out the reaction 3-[(4R)-4-hydroxycyclohexa-1,5-dien-1-yl]-2-oxopropanoate = 3-[(1E,4R)-4-hydroxycyclohex-2-en-1-ylidene]pyruvate. Its pathway is antibiotic biosynthesis; bacilysin biosynthesis. Functionally, part of the bacABCDEF operon responsible for the biosynthesis of the nonribosomally synthesized dipeptide antibiotic bacilysin, composed of L-alanine and L-anticapsin. Bacilysin is an irreversible inactivator of the glutaminase domain of glucosamine synthetase. BacB catalyzes the allylic isomerization of the endocyclic-delta(4),delta(8)-7R-dihydro-hydroxyphenylpyruvate (en-H2HPP) to generate a mixture of 3E,7R- and 3Z, 7R-olefins (E/Z ration of 3/1) of the exocyclic-delta(3),delta(5)-dihydro-hydroxyphenylpyruvate (ex-H2HPP). The polypeptide is H2HPP isomerase (Bacillus subtilis (strain 168)).